The sequence spans 734 residues: MVSRFPKFSQGLSQDPTTRRIWFGIATAHDFESHDDTTEERLYQKIFASHFGQLAIIFLWTSGNLFHVAWQGNFETWVQDPLHVRPIAHAIWDPHFGQPAVEAYTRGGSAGPVNIAYSGVYQWWYTIGLRNNEDLYTGAIFLLAVAALFLLASWLHLQPKWKPSISWFKNAESRLNHHLSGLFGVSSLAWTGHLIHVAIPEARGGHVRWNDLLTTAPHPQGLGPFFSGQWSVYSQNPDSNTHLFNSNQGAGTAILTFLGGFHPQTQSLWLTDMAHHHLAIAVVFIIAGHMYRTNFGIGHSMKEILDAHIPPGGKLGRGHRGLYDTVNNSLHFQLGLALAALGVITSLVAQHMYSLPAYAFLAQDYTTQAALYTHHQYIAGFIMAGAFAHGAIFFLRDYDPEQNRDNVLARMLEHKEAIISHLSWASLFLGFHTLGLYVHNDVMLAFGTPEKQILIEPVFAQWIQSAHGKVSYGFDVLLSSVDSPASNAGRGLWLPGWLDAVNSSNNSLFLTIGPGDFLVHHAIALGLHTTTLILVKGALDARGSKLMPDKKEFGYSFPCDGPGRGGTCDISAWDAFYLAVFWMLNTIGWVTFYWHWKHITLWQGNAAQFNESSTYLMGWLRDYLWLNSSQLINGYNPFGMNSLSVWAWMFLFGHLVWATGFMFLISWRGYWQELIETLAWAHERTPLANMIRWKDKPVALSIVQARLVGLAHFSVGYIFTYAAFLIASTSGKFG.

A run of 8 helical transmembrane segments spans residues 46 to 69 (IFAS…FHVA), 135 to 158 (LYTG…LHLQ), 175 to 199 (LNHH…HVAI), 273 to 291 (MAHH…GHMY), 330 to 353 (LHFQ…QHMY), 369 to 395 (AALY…IFFL), 417 to 439 (AIIS…LYVH), and 517 to 535 (FLVH…LILV). [4Fe-4S] cluster is bound by residues C559 and C568. The next 2 membrane-spanning stretches (helical) occupy residues 575–596 (AFYL…YWHW) and 643–665 (LSVW…MFLI). Positions 654, 662, and 670 each coordinate chlorophyll a. Position 671 (W671) interacts with phylloquinone. The chain crosses the membrane as a helical span at residues 707-727 (LVGLAHFSVGYIFTYAAFLIA).

The protein belongs to the PsaA/PsaB family. As to quaternary structure, the PsaA/B heterodimer binds the P700 chlorophyll special pair and subsequent electron acceptors. PSI consists of a core antenna complex that captures photons, and an electron transfer chain that converts photonic excitation into a charge separation. The eukaryotic PSI reaction center is composed of at least 11 subunits. The cofactor is P700 is a chlorophyll a/chlorophyll a' dimer, A0 is one or more chlorophyll a, A1 is one or both phylloquinones and FX is a shared 4Fe-4S iron-sulfur center..

It is found in the plastid. It localises to the chloroplast thylakoid membrane. It carries out the reaction reduced [plastocyanin] + hnu + oxidized [2Fe-2S]-[ferredoxin] = oxidized [plastocyanin] + reduced [2Fe-2S]-[ferredoxin]. Its function is as follows. PsaA and PsaB bind P700, the primary electron donor of photosystem I (PSI), as well as the electron acceptors A0, A1 and FX. PSI is a plastocyanin-ferredoxin oxidoreductase, converting photonic excitation into a charge separation, which transfers an electron from the donor P700 chlorophyll pair to the spectroscopically characterized acceptors A0, A1, FX, FA and FB in turn. Oxidized P700 is reduced on the lumenal side of the thylakoid membrane by plastocyanin. The polypeptide is Photosystem I P700 chlorophyll a apoprotein A2 (Adiantum capillus-veneris (Maidenhair fern)).